The sequence spans 456 residues: UDP-N-acetylmuramoylalanine--D-glutamate ligase (456 aa).

Residue 113–119 (GTNGKTT) coordinates ATP.

It belongs to the MurCDEF family.

The protein localises to the cytoplasm. The enzyme catalyses UDP-N-acetyl-alpha-D-muramoyl-L-alanine + D-glutamate + ATP = UDP-N-acetyl-alpha-D-muramoyl-L-alanyl-D-glutamate + ADP + phosphate + H(+). The protein operates within cell wall biogenesis; peptidoglycan biosynthesis. Its function is as follows. Cell wall formation. Catalyzes the addition of glutamate to the nucleotide precursor UDP-N-acetylmuramoyl-L-alanine (UMA). The chain is UDP-N-acetylmuramoylalanine--D-glutamate ligase from Rippkaea orientalis (strain PCC 8801 / RF-1) (Cyanothece sp. (strain PCC 8801)).